Here is a 368-residue protein sequence, read N- to C-terminus: Microtubule-associated protein Jupiter (368 aa).

Residue serine 30 is modified to Phosphoserine. Threonine 41 is modified (phosphothreonine). Over residues 81–93 (RRGQKSVDSHSRL) the composition is skewed to basic and acidic residues. A disordered region spans residues 81-106 (RRGQKSVDSHSRLFGEPSRPITPGKN). Threonine 102 is modified (phosphothreonine). A phosphoserine mark is found at serine 111, serine 146, and serine 157. Composition is skewed to low complexity over residues 129–157 (NGNT…VSSS) and 238–248 (GRYGYSSQSRR). Disordered stretches follow at residues 129 to 164 (NGNT…LKIN), 196 to 256 (SQGN…SPLN), and 316 to 368 (KPKK…SGLW). The span at 337–354 (GSDSAQTPTMNGANQVIN) shows a compositional bias: polar residues.

The protein belongs to the MAP Jupiter family.

It is found in the nucleus. It localises to the cytoplasm. The protein localises to the cytoskeleton. The protein resides in the spindle. Functionally, binds to all microtubule populations. The sequence is that of Microtubule-associated protein Jupiter from Drosophila willistoni (Fruit fly).